The chain runs to 393 residues: Short-chain dehydrogenase/reductase family 42E member 1 (393 aa).

Tyrosine 152 (proton acceptor) is an active-site residue. Residue lysine 156 participates in NAD(+) binding. The next 2 membrane-spanning stretches (helical) occupy residues 282-302 (LPLTLVYCFAFLTEMVHFILG) and 371-391 (GLLVFLLIIAVLMWLPSSVIL).

The protein belongs to the 3-beta-HSD family.

The protein resides in the membrane. The chain is Short-chain dehydrogenase/reductase family 42E member 1 (SDR42E1) from Homo sapiens (Human).